The primary structure comprises 248 residues: MSLFPSLPLLLLSMVAASYSETVTCEDAQKTCPAVIACSSPGINGFPGKDGRDGTKGEKGEPGQGLRGLQGPPGKLGPPGNPGPSGSPGPKGQKGDPGKSPDGDSSLAASERKALQTEMARIKKWLTFSLGKQVGNKFFLTNGEIMTFEKVKALCVKFQASVATPRNAAENGAIQNLIKEEAFLGITDEKTEGQFVDLTGNRLTYTNWNEGEPNNAGSDEDCVLLLKNGQWNDVPCSTSHLAVCEFPI.

A signal peptide spans 1–20 (MSLFPSLPLLLLSMVAASYS). One can recognise a Collagen-like domain in the interval 42–99 (GINGFPGKDGRDGTKGEKGEPGQGLRGLQGPPGKLGPPGNPGPSGSPGPKGQKGDPGK). The disordered stretch occupies residues 43–113 (INGFPGKDGR…DSSLAASERK (71 aa)). Pro-47 bears the Hydroxyproline mark. The segment covering 49–61 (KDGRDGTKGEKGE) has biased composition (basic and acidic residues). Hydroxyproline occurs at positions 73, 79, 82, and 88. Pro residues predominate over residues 75 to 87 (KLGPPGNPGPSGS). Positions 93–102 (QKGDPGKSPD) are enriched in basic and acidic residues. The stretch at 112-130 (RKALQTEMARIKKWLTFSL) forms a coiled coil. Residues 134 to 245 (VGNKFFLTNG…CSTSHLAVCE (112 aa)) form the C-type lectin domain. Cystine bridges form between Cys-155/Cys-244 and Cys-222/Cys-236.

As to quaternary structure, oligomeric complex of 3 or more homotrimers. Interacts with MASP1 and MASP2. Interacts with MEP1A and MEP1B and may inhibit their catalytic activity. Interacts with CR1 (via Sushi 24 and Sushi 25 domains). In terms of assembly, (Microbial infection) Interacts with SARS coronavirus-2/SARS-CoV-2 Spike glycoprotein homotrimer; the interaction is calcium-dependent and modulated by Spike glycoprotein glycosylation state. Plasma protein produced mainly in the liver.

It is found in the secreted. Its function is as follows. Calcium-dependent lectin involved in innate immune defense. Binds mannose, fucose and N-acetylglucosamine on different microorganisms and activates the lectin complement pathway. Binds to late apoptotic cells, as well as to apoptotic blebs and to necrotic cells, but not to early apoptotic cells, facilitating their uptake by macrophages. May bind DNA. Upon SARS coronavirus-2/SARS-CoV-2 infection, activates the complement lectin pathway which leads to the inhibition SARS-CoV-2 infection and a reduction of the induced inflammatory response. The sequence is that of Mannose-binding protein C from Homo sapiens (Human).